The primary structure comprises 227 residues: uncharacterized protein (227 aa).

The 117-residue stretch at 3–119 (RADFCIIGLG…STMGIREALI (117 aa)) folds into the RCK N-terminal domain. Residues 134 to 221 (HGLENEIINL…LNKYLNYINP (88 aa)) enclose the RCK C-terminal domain.

This is an uncharacterized protein from Mycoplasma genitalium (strain ATCC 33530 / DSM 19775 / NCTC 10195 / G37) (Mycoplasmoides genitalium).